A 445-amino-acid polypeptide reads, in one-letter code: CBL-interacting serine/threonine-protein kinase 8 (445 aa).

A Protein kinase domain is found at 9-262; that stretch reads YELGRTIGEG…IAEIRKDEWF (254 aa). ATP is bound by residues 15–23 and K38; that span reads IGEGTFAKV. D132 acts as the Proton acceptor in catalysis. The tract at residues 150–177 is activation loop; it reads DFGLSALPEQGVTILKTTCGTPNYVAPE. S154 carries the phosphoserine modification. Phosphothreonine is present on T166. In terms of domain architecture, NAF spans 302 to 326; it reads TGPLTLNAFDLIILSQGLNLATLFD. The segment at 333–362 is PPI; it reads KHQTRFISHKPANVVLSSMEVVSQSMGFKT.

It belongs to the protein kinase superfamily. CAMK Ser/Thr protein kinase family. SNF1 subfamily. In terms of assembly, interacts with CBL1 and CBL9. It depends on Mn(2+) as a cofactor. Mostly expressed in roots, and, to a lower extent, in leaves, stems, flowers, and siliques.

It carries out the reaction L-seryl-[protein] + ATP = O-phospho-L-seryl-[protein] + ADP + H(+). The catalysed reaction is L-threonyl-[protein] + ATP = O-phospho-L-threonyl-[protein] + ADP + H(+). Functionally, CIPK serine-threonine protein kinases interact with CBL proteins. Binding of a CBL protein to the regulatory NAF domain of CIPK protein lead to the activation of the kinase in a calcium-dependent manner. The protein is CBL-interacting serine/threonine-protein kinase 8 (CIPK8) of Arabidopsis thaliana (Mouse-ear cress).